A 980-amino-acid polypeptide reads, in one-letter code: Ovochymase-2 (980 aa).

The N-terminal stretch at 1 to 21 (MAETSVFSIMMLTVMTAVGRG) is a signal peptide. Positions 22-49 (ATDRPGRVSRCGERPSANASVTYNLLSR) are cleaved as a propeptide — activation peptide. An N-linked (GlcNAc...) asparagine glycan is attached at Asn-39. The region spanning 50 to 299 (IVGGTSAVKG…LLNWLSANLN (250 aa)) is the Peptidase S1 1 domain. A disulfide bridge links Cys-75 with Cys-91. The active-site Charge relay system is the His-90. Ca(2+) contacts are provided by Val-112 and Glu-117. The active-site Charge relay system is Asp-140. Intrachain disulfides connect Cys-174–Cys-244, Cys-205–Cys-223, Cys-234–Cys-263, Cys-312–Cys-342, Cys-369–Cys-388, Cys-435–Cys-462, Cys-489–Cys-510, Cys-618–Cys-634, Cys-716–Cys-779, Cys-744–Cys-757, and Cys-769–Cys-798. The active-site Charge relay system is the Ser-238. CUB domains follow at residues 312–425 (CSTN…YQAV) and 435–547 (CGSV…ISFV). The Peptidase S1 2 domain maps to 593 to 822 (IIKAEEAMPN…FIPWIMETIL (230 aa)). Residues 593 to 980 (IIKAEEAMPN…WLSYSFHNQN (388 aa)) constitute a propeptide, activation peptide. An N-linked (GlcNAc...) asparagine glycan is attached at Asn-766. Residues 835–863 (HHPLIPPDKLSQEKALLPDSPPSNDSSSS) are disordered. N-linked (GlcNAc...) asparagine glycans are attached at residues Asn-858 and Asn-932.

The protein belongs to the peptidase S1 family. The catalytically inactive 108 kDa form is processed both N- and C-terminally to give rise to catalytically active and inactive forms. As to expression, differentially expressed in the oviductal pars recta (PR) region.

The protein localises to the secreted. It catalyses the reaction Preferential cleavage at 371-Gly-Ser-Arg-|-Trp-374 of glycoprotein gp43 in Xenopus laevis coelemic egg envelope to yield gp41.. Mediates gamete interaction by affecting the vitelline coat. In Rhinella arenarum (Argentine common toad), this protein is Ovochymase-2 (OVCH2).